Consider the following 323-residue polypeptide: rRNA 2'-O-methyltransferase fibrillarin (323 aa).

Residues 1-78 are disordered; that stretch reads MRPGFSPRGG…GGGRGGFGGG (78 aa). Gly residues-rich tracts occupy residues 7–44 and 63–78; these read PRGG…GGRG and GRGG…FGGG. An asymmetric dimethylarginine mark is found at Arg-8, Arg-17, Arg-23, and Arg-29. S-adenosyl-L-methionine is bound by residues 174 to 175, 193 to 194, 218 to 219, and 238 to 241; these read TT, EF, DA, and DVAQ. The tract at residues 276-308 is helical; the sequence is APEAVFAAEVKKMQQENMKPQEQLTLEPYERDH.

It belongs to the methyltransferase superfamily. Fibrillarin family. Component of box C/D small nucleolar ribonucleoprotein (snoRNP) particles. Part of the small subunit (SSU) processome, composed of more than 70 proteins and the RNA chaperone small nucleolar RNA (snoRNA) U3. In terms of processing, by homology to other fibrillarins, some or all of the N-terminal domain arginines are modified to asymmetric dimethylarginine (DMA).

It localises to the nucleus. The protein localises to the nucleolus. Its subcellular location is the nucleoplasm. The enzyme catalyses L-glutaminyl-[histone H2A] + S-adenosyl-L-methionine = N(5)-methyl-L-glutaminyl-[histone H2A] + S-adenosyl-L-homocysteine + H(+). It catalyses the reaction a ribonucleotide in rRNA + S-adenosyl-L-methionine = a 2'-O-methylribonucleotide in rRNA + S-adenosyl-L-homocysteine + H(+). The catalysed reaction is a ribonucleotide in U6 snRNA + S-adenosyl-L-methionine = a 2'-O-methylribonucleotide in U6 snRNA + S-adenosyl-L-homocysteine + H(+). S-adenosyl-L-methionine-dependent methyltransferase that has the ability to methylate both RNAs and proteins. Involved in pre-rRNA processing by catalyzing the site-specific 2'-hydroxyl methylation of ribose moieties in pre-ribosomal RNA. Probably catalyzes 2'-O-methylation of U6 snRNAs in box C/D RNP complexes. U6 snRNA 2'-O-methylation is required for mRNA splicing fidelity. Also acts as a protein methyltransferase by mediating methylation of 'Gln-105' of histone H2A (H2AQ104me), a modification that impairs binding of the FACT complex and is specifically present at 35S ribosomal DNA locus. Part of the small subunit (SSU) processome, first precursor of the small eukaryotic ribosomal subunit. During the assembly of the SSU processome in the nucleolus, many ribosome biogenesis factors, an RNA chaperone and ribosomal proteins associate with the nascent pre-rRNA and work in concert to generate RNA folding, modifications, rearrangements and cleavage as well as targeted degradation of pre-ribosomal RNA by the RNA exosome. This Xenopus laevis (African clawed frog) protein is rRNA 2'-O-methyltransferase fibrillarin (fbl).